The following is a 363-amino-acid chain: MKQKYRIAILPGDGIGPEVMREAYKILSILKDHFSLSLEIQEFNIGGSAIDQEGIALPKKTLLGCQNSDAILFGSVGGKRWDHLPINERPERASLLPLRKHFNLFANLRPAKLYSELQHLSPIRSNIIKNGFDILCVRELTGGIYFGKPSDRVKKNNVEYAFDTEVYYDYEINRIAHLAFQLARTRKFKVCSIDKSNVLNSSILWREVVEKVSKMYPDVHLSHLYIDNATMQIIKNPNQFDVLLCSNLFGDIISDECAVITGSIGMLPSASFNEKNFGLYEPAGGSAPDIAGKNTANPIAQILSLSMLVRYGMKLNKIADKIDDAVALSLKAGYRTADISNDNNFLKTNEMGDVIANFLINGK.

NAD(+) is bound at residue 78–91 (GKRWDHLPINERPE). Residues R99, R109, R138, and D227 each coordinate substrate. Mg(2+)-binding residues include D227, D251, and D255. 285–297 (GSAPDIAGKNTAN) lines the NAD(+) pocket.

It belongs to the isocitrate and isopropylmalate dehydrogenases family. LeuB type 1 subfamily. As to quaternary structure, homodimer. It depends on Mg(2+) as a cofactor. Mn(2+) serves as cofactor.

The protein resides in the cytoplasm. The catalysed reaction is (2R,3S)-3-isopropylmalate + NAD(+) = 4-methyl-2-oxopentanoate + CO2 + NADH. The protein operates within amino-acid biosynthesis; L-leucine biosynthesis; L-leucine from 3-methyl-2-oxobutanoate: step 3/4. Catalyzes the oxidation of 3-carboxy-2-hydroxy-4-methylpentanoate (3-isopropylmalate) to 3-carboxy-4-methyl-2-oxopentanoate. The product decarboxylates to 4-methyl-2 oxopentanoate. This Buchnera aphidicola subsp. Uroleucon helianthicola protein is 3-isopropylmalate dehydrogenase.